A 95-amino-acid chain; its full sequence is Small ribosomal subunit protein uS17 (95 aa).

It belongs to the universal ribosomal protein uS17 family. As to quaternary structure, part of the 30S ribosomal subunit.

In terms of biological role, one of the primary rRNA binding proteins, it binds specifically to the 5'-end of 16S ribosomal RNA. This chain is Small ribosomal subunit protein uS17, found in Streptomyces coelicolor (strain ATCC BAA-471 / A3(2) / M145).